The primary structure comprises 116 residues: HVA22-like protein e (116 aa).

3 helical membrane-spanning segments follow: residues H12–I32, Q42–S62, and L63–L83.

This sequence belongs to the DP1 family. Predominantly expressed in stem.

Its subcellular location is the membrane. In Arabidopsis thaliana (Mouse-ear cress), this protein is HVA22-like protein e (HVA22E).